The following is a 234-amino-acid chain: Large ribosomal subunit protein uL1 (234 aa).

It belongs to the universal ribosomal protein uL1 family. As to quaternary structure, part of the 50S ribosomal subunit.

Functionally, binds directly to 23S rRNA. The L1 stalk is quite mobile in the ribosome, and is involved in E site tRNA release. Protein L1 is also a translational repressor protein, it controls the translation of the L11 operon by binding to its mRNA. In Yersinia enterocolitica serotype O:8 / biotype 1B (strain NCTC 13174 / 8081), this protein is Large ribosomal subunit protein uL1.